The following is a 704-amino-acid chain: MAKITKTFQYGKHTVTLETGEIARQAGGAVIVKFDDTVLLVTAVAAKSAREGQDFFPLTVDYQEKFYAGGRIPGGFFKREGRATEKETLISRLIDRPIRPLFPEDYKNEVQIIATVMSMNPDIDGDIAALIGASAALSLAGTPFKGPIGAAKVGYKNGEYILNPTVTELKDSQLELVVAGTANAVLMVESEAELLSEEVMLGAVTFGHREMQKVINVINELTVEAGTKPSDWVAPAKNEGMIAALKEAVGDQLASAFQVRDKLQRRDAISAIKKDVLGALAPRATIEGWAAGDLAKEFGELEYQTMRGSVLSSKVRIDGRALDTVRPISAKAGVLPRTHGSALFTRGETQAIVITTLGTARDGQVIDAVSGEYKENFLFHYNFPPYSVGECGRFGAPKRREIGHGRLAKRGVLAVMPTLEEFPYTIRVVSEITESNGSSSMASVCGSSLALMDAGVPIKAPVAGIAMGLVKEGNDFVVLSDILGDEDHLGDMDFKVAGTAEGVSALQMDIKIEGITEEIMKQALQQAKAGRLHILGEMAHALTTPRQELSDYAPRLLTIKIHPDKIREVIGKGGSTIQAITKETGTQIDIQDDGTIIIASVNAIAAQAAKSRIEQITSDVEPGRIYEGKVAKIMDFGAFVTILPGKDGLVHVSQISSERVEKVGDKLKEGDLVRVKVLEVDKQGRIRLSIKAVEEGEGVQASAE.

Positions 487 and 493 each coordinate Mg(2+). In terms of domain architecture, KH spans proline 554–isoleucine 613. Positions glycine 623 to lysine 691 constitute an S1 motif domain.

Belongs to the polyribonucleotide nucleotidyltransferase family. As to quaternary structure, component of the RNA degradosome, which is a multiprotein complex involved in RNA processing and mRNA degradation. Mg(2+) serves as cofactor.

The protein localises to the cytoplasm. The catalysed reaction is RNA(n+1) + phosphate = RNA(n) + a ribonucleoside 5'-diphosphate. In terms of biological role, involved in mRNA degradation. Catalyzes the phosphorolysis of single-stranded polyribonucleotides processively in the 3'- to 5'-direction. The polypeptide is Polyribonucleotide nucleotidyltransferase (Xanthomonas euvesicatoria pv. vesicatoria (strain 85-10) (Xanthomonas campestris pv. vesicatoria)).